An 836-amino-acid polypeptide reads, in one-letter code: Phenylalanine--tRNA ligase beta subunit (836 aa).

A tRNA-binding domain is found at 44–160 (PETTGPLVIG…EIAEPGTDAR (117 aa)). Residues 420 to 495 (PSMPQIRMKT…RLEGLEDIPT (76 aa)) form the B5 domain. The Mg(2+) site is built by aspartate 473, aspartate 479, glutamate 482, and glutamate 483. Residues 742 to 835 (SAFPVLHQDL…AAELFGATMR (94 aa)) enclose the FDX-ACB domain.

This sequence belongs to the phenylalanyl-tRNA synthetase beta subunit family. Type 1 subfamily. Tetramer of two alpha and two beta subunits. It depends on Mg(2+) as a cofactor.

It localises to the cytoplasm. The enzyme catalyses tRNA(Phe) + L-phenylalanine + ATP = L-phenylalanyl-tRNA(Phe) + AMP + diphosphate + H(+). The chain is Phenylalanine--tRNA ligase beta subunit from Corynebacterium diphtheriae (strain ATCC 700971 / NCTC 13129 / Biotype gravis).